A 157-amino-acid polypeptide reads, in one-letter code: S-ribosylhomocysteine lyase (157 aa).

The Fe cation site is built by His-54, His-58, and Cys-126.

The protein belongs to the LuxS family. Homodimer. The cofactor is Fe cation.

The enzyme catalyses S-(5-deoxy-D-ribos-5-yl)-L-homocysteine = (S)-4,5-dihydroxypentane-2,3-dione + L-homocysteine. Its function is as follows. Involved in the synthesis of autoinducer 2 (AI-2) which is secreted by bacteria and is used to communicate both the cell density and the metabolic potential of the environment. The regulation of gene expression in response to changes in cell density is called quorum sensing. Catalyzes the transformation of S-ribosylhomocysteine (RHC) to homocysteine (HC) and 4,5-dihydroxy-2,3-pentadione (DPD). The protein is S-ribosylhomocysteine lyase of Bacillus cytotoxicus (strain DSM 22905 / CIP 110041 / 391-98 / NVH 391-98).